Consider the following 194-residue polypeptide: ATP-dependent Clp protease proteolytic subunit (194 aa).

S97 functions as the Nucleophile in the catalytic mechanism. H122 is a catalytic residue.

Belongs to the peptidase S14 family. As to quaternary structure, fourteen ClpP subunits assemble into 2 heptameric rings which stack back to back to give a disk-like structure with a central cavity, resembling the structure of eukaryotic proteasomes.

The protein localises to the cytoplasm. It catalyses the reaction Hydrolysis of proteins to small peptides in the presence of ATP and magnesium. alpha-casein is the usual test substrate. In the absence of ATP, only oligopeptides shorter than five residues are hydrolyzed (such as succinyl-Leu-Tyr-|-NHMec, and Leu-Tyr-Leu-|-Tyr-Trp, in which cleavage of the -Tyr-|-Leu- and -Tyr-|-Trp bonds also occurs).. Cleaves peptides in various proteins in a process that requires ATP hydrolysis. Has a chymotrypsin-like activity. Plays a major role in the degradation of misfolded proteins. This chain is ATP-dependent Clp protease proteolytic subunit, found in Lactobacillus helveticus (strain DPC 4571).